Reading from the N-terminus, the 234-residue chain is Carboxy-S-adenosyl-L-methionine synthase (234 aa).

S-adenosyl-L-methionine is bound by residues Tyr-35, 60–62, 83–84, and Arg-191; these read GCS and DN.

The protein belongs to the class I-like SAM-binding methyltransferase superfamily. Cx-SAM synthase family. Homodimer.

It catalyses the reaction prephenate + S-adenosyl-L-methionine = carboxy-S-adenosyl-L-methionine + 3-phenylpyruvate + H2O. Its function is as follows. Catalyzes the conversion of S-adenosyl-L-methionine (SAM) to carboxy-S-adenosyl-L-methionine (Cx-SAM). The protein is Carboxy-S-adenosyl-L-methionine synthase of Campylobacter lari (strain RM2100 / D67 / ATCC BAA-1060).